The sequence spans 192 residues: Adenylate kinase (192 aa).

Residue 10 to 18 coordinates ATP; sequence GVPGVGSTT.

Belongs to the archaeal adenylate kinase family. In terms of assembly, monomer.

It is found in the cytoplasm. The enzyme catalyses AMP + ATP = 2 ADP. The sequence is that of Adenylate kinase (adkA) from Methanococcus voltae.